Here is a 35-residue protein sequence, read N- to C-terminus: Cupiennin-1c (35 aa).

Glu35 carries the post-translational modification Glutamic acid 1-amide.

As to expression, expressed by the venom gland.

It localises to the secreted. Functionally, has antimicrobial activity against E.coli, E.faecalis, P.aeruginosa, and S.aureus. The polypeptide is Cupiennin-1c (Cupiennius salei (American wandering spider)).